We begin with the raw amino-acid sequence, 480 residues long: Protein nucleotidyltransferase YdiU (480 aa).

ATP is bound by residues Gly-86, Gly-88, Arg-89, Lys-109, Asp-121, Gly-122, Arg-172, and Arg-179. Residue Asp-248 is the Proton acceptor of the active site. 2 residues coordinate Mg(2+): Asn-249 and Asp-258. ATP is bound at residue Asp-258.

The protein belongs to the SELO family. It depends on Mg(2+) as a cofactor. Requires Mn(2+) as cofactor.

The enzyme catalyses L-seryl-[protein] + ATP = 3-O-(5'-adenylyl)-L-seryl-[protein] + diphosphate. It catalyses the reaction L-threonyl-[protein] + ATP = 3-O-(5'-adenylyl)-L-threonyl-[protein] + diphosphate. It carries out the reaction L-tyrosyl-[protein] + ATP = O-(5'-adenylyl)-L-tyrosyl-[protein] + diphosphate. The catalysed reaction is L-histidyl-[protein] + UTP = N(tele)-(5'-uridylyl)-L-histidyl-[protein] + diphosphate. The enzyme catalyses L-seryl-[protein] + UTP = O-(5'-uridylyl)-L-seryl-[protein] + diphosphate. It catalyses the reaction L-tyrosyl-[protein] + UTP = O-(5'-uridylyl)-L-tyrosyl-[protein] + diphosphate. In terms of biological role, nucleotidyltransferase involved in the post-translational modification of proteins. It can catalyze the addition of adenosine monophosphate (AMP) or uridine monophosphate (UMP) to a protein, resulting in modifications known as AMPylation and UMPylation. This chain is Protein nucleotidyltransferase YdiU, found in Salmonella schwarzengrund (strain CVM19633).